Consider the following 345-residue polypeptide: 4-hydroxy-2-oxovalerate aldolase 3 (345 aa).

In terms of domain architecture, Pyruvate carboxyltransferase spans 8–260 (ITVHDMTLRD…ETGVDVWKIQ (253 aa)). 16–17 (RD) provides a ligand contact to substrate. Residue Asp17 coordinates Mn(2+). Catalysis depends on His20, which acts as the Proton acceptor. Substrate-binding residues include Ser170 and His199. Positions 199 and 201 each coordinate Mn(2+). Residue Tyr290 participates in substrate binding.

It belongs to the 4-hydroxy-2-oxovalerate aldolase family.

The catalysed reaction is (S)-4-hydroxy-2-oxopentanoate = acetaldehyde + pyruvate. This is 4-hydroxy-2-oxovalerate aldolase 3 (aphG) from Comamonas testosteroni (Pseudomonas testosteroni).